The primary structure comprises 378 residues: Secreted LysM effector ldpA (378 aa).

The N-terminal stretch at 1–19 is a signal peptide; sequence MMKSIRFLASALALCLVDA. The span at 118–131 shows a compositional bias: low complexity; the sequence is WTPPTTTTRSTSSS. The disordered stretch occupies residues 118 to 139; the sequence is WTPPTTTTRSTSSSAGNGVTTP. A LysM 1 domain is found at 152 to 198; sequence RFYLVVSGDSCYDIAAAQGISLDNFYTWNPAVGSSCGGLWPDYYVCV. A disordered region spans residues 208–230; it reads TTTTTTTPTTTSTTTTTAGNGVT. 2 LysM domains span residues 245-291 and 330-376; these read KFYQ…YVCV and KFYL…YVCV.

Belongs to the secreted LysM effector family.

It localises to the secreted. Its subcellular location is the cell wall. The protein localises to the extracellular space. The protein resides in the extracellular matrix. Cell wall chitin of A.fumigatus recruits lung eosinophils during infection and ldpA might have a role in sequestration of chitin and act as triggers of host immunity to dampen host defense. In Aspergillus fumigatus (strain ATCC MYA-4609 / CBS 101355 / FGSC A1100 / Af293) (Neosartorya fumigata), this protein is Secreted LysM effector ldpA.